Here is a 274-residue protein sequence, read N- to C-terminus: Secreted RxLR effector protein 144 (274 aa).

Residues 1 to 20 (MRPWLLLLVGLSSFFALSTS) form the signal peptide. Residues 49–72 (RKLRAFGGDTNTLKDSGKARREEK) carry the RxLR-dEER motif.

It belongs to the RxLR effector family.

It is found in the secreted. The protein resides in the host nucleus. It localises to the host cytoplasm. Functionally, secreted effector that completely suppresses the host cell death induced by cell death-inducing proteins. This chain is Secreted RxLR effector protein 144, found in Plasmopara viticola (Downy mildew of grapevine).